The sequence spans 81 residues: Putative membrane protein insertion efficiency factor (81 aa).

Residues 61-81 (NDGGFDPVPPAPSSRTSSIAE) are disordered.

This sequence belongs to the UPF0161 family.

Its subcellular location is the cell inner membrane. Could be involved in insertion of integral membrane proteins into the membrane. The protein is Putative membrane protein insertion efficiency factor of Pseudomonas entomophila (strain L48).